The sequence spans 877 residues: Lipophilic envelope-spanning tunnel protein B (877 aa).

The Cytoplasmic portion of the chain corresponds to 1 to 19 (MSQETPASTTEAQIKNKRR). The chain crosses the membrane as a helical span at residues 20 to 40 (ISPFWLLPFIALMIASWLIWD). The Periplasmic portion of the chain corresponds to 41-877 (SYQDRGNTVT…WREWGTALPK (837 aa)). 7 MCE/MlaD regions span residues 46 to 149 (GNTV…VALD), 160 to 272 (DLMI…GLYE), 279 to 382 (RGVI…VVPG), 391 to 499 (DVLT…PLYA), 515 to 625 (TTVS…ILYA), 634 to 737 (GGQI…LQEA), and 746 to 862 (DGLS…LLQE).

Belongs to the PqiB family. As to quaternary structure, homohexamer. May interact with LetA in the inner membrane. May also interact with partners in the outer membrane.

Its subcellular location is the cell inner membrane. Its function is as follows. Forms a tunnel that spans the entire periplasmic space. Is probably involved in the transport of lipids between the inner membrane and the outer membrane through the tunnel. Forms a dynamic tunnel sufficiently long to mediate lipid transport directly between the two membranes without the need for a shuttle protein. Binds phospholipids. Lipids bind inside the tunnel. Required for outer membrane homeostasis. Contributes to membrane integrity. The protein is Lipophilic envelope-spanning tunnel protein B of Escherichia coli (strain K12).